Consider the following 57-residue polypeptide: Protein translocase subunit SecE (57 aa).

The chain crosses the membrane as a helical span at residues 30-50; sequence LIAGAGIVFVGFLGFLIFAIM.

It belongs to the SecE/SEC61-gamma family. In terms of assembly, component of the Sec protein translocase complex. Heterotrimer consisting of SecY (alpha), SecG (beta) and SecE (gamma) subunits. The heterotrimers can form oligomers, although 1 heterotrimer is thought to be able to translocate proteins. Interacts with the ribosome. May interact with SecDF, and other proteins may be involved.

The protein resides in the cell membrane. Functionally, essential subunit of the Sec protein translocation channel SecYEG. Clamps together the 2 halves of SecY. May contact the channel plug during translocation. In Haloquadratum walsbyi (strain DSM 16790 / HBSQ001), this protein is Protein translocase subunit SecE.